The sequence spans 565 residues: Adenine deaminase (565 aa).

The protein belongs to the metallo-dependent hydrolases superfamily. Adenine deaminase family. The cofactor is Mn(2+).

The catalysed reaction is adenine + H2O + H(+) = hypoxanthine + NH4(+). This is Adenine deaminase from Lactobacillus delbrueckii subsp. bulgaricus (strain ATCC 11842 / DSM 20081 / BCRC 10696 / JCM 1002 / NBRC 13953 / NCIMB 11778 / NCTC 12712 / WDCM 00102 / Lb 14).